A 451-amino-acid polypeptide reads, in one-letter code: Ubiquinone biosynthesis monooxygenase COQ6, mitochondrial (451 aa).

It belongs to the UbiH/COQ6 family. As to quaternary structure, component of a multi-subunit COQ enzyme complex. It depends on FAD as a cofactor.

The protein localises to the mitochondrion inner membrane. The enzyme catalyses a 4-hydroxy-3-(all-trans-polyprenyl)benzoate + 2 reduced [2Fe-2S]-[ferredoxin] + O2 + 2 H(+) = a 3,4-dihydroxy-5-(all-trans-polyprenyl)benzoate + 2 oxidized [2Fe-2S]-[ferredoxin] + H2O. The catalysed reaction is a 2-methoxy-6-(all-trans-polyprenyl)phenol + 2 reduced [2Fe-2S]-[ferredoxin] + O2 + 2 H(+) = a 2-methoxy-6-(all-trans-polyprenyl)benzene-1,4-diol + 2 oxidized [2Fe-2S]-[ferredoxin] + H2O. It participates in cofactor biosynthesis; ubiquinone biosynthesis. In terms of biological role, FAD-dependent monooxygenase required for two non-consecutive steps during ubiquinone biosynthesis. Required for the C5-ring hydroxylation during ubiquinone biosynthesis by catalyzing the hydroxylation of 4-hydroxy-3-(all-trans-polyprenyl)benzoic acid to 3,4-dihydroxy-5-(all-trans-polyprenyl)benzoic acid. Also acts downstream of coq4, for the C1-hydroxylation during ubiquinone biosynthesis by catalyzing the hydroxylation of 2-methoxy-6-(all-trans-polyprenyl)phenol to 2-methoxy-6-(all-trans-polyprenyl)benzene-1,4-diol. The electrons required for the hydroxylation reaction are funneled indirectly to coq-6 from NADPH via a ferredoxin/ferredoxin reductase system. This chain is Ubiquinone biosynthesis monooxygenase COQ6, mitochondrial, found in Caenorhabditis elegans.